The chain runs to 419 residues: 3-isopropylmalate dehydratase large subunit (419 aa).

[4Fe-4S] cluster-binding residues include Cys-301, Cys-361, and Cys-364.

This sequence belongs to the aconitase/IPM isomerase family. LeuC type 2 subfamily. As to quaternary structure, heterodimer of LeuC and LeuD. It depends on [4Fe-4S] cluster as a cofactor.

It catalyses the reaction (2R,3S)-3-isopropylmalate = (2S)-2-isopropylmalate. Its pathway is amino-acid biosynthesis; L-leucine biosynthesis; L-leucine from 3-methyl-2-oxobutanoate: step 2/4. In terms of biological role, catalyzes the isomerization between 2-isopropylmalate and 3-isopropylmalate, via the formation of 2-isopropylmaleate. The sequence is that of 3-isopropylmalate dehydratase large subunit from Campylobacter hominis (strain ATCC BAA-381 / DSM 21671 / CCUG 45161 / LMG 19568 / NCTC 13146 / CH001A).